The following is a 306-amino-acid chain: Beta-lactamase 1 (306 aa).

Residues 1–43 form the signal peptide; it reads MKNKKMLKIGMCVGILGLSITSLVTFTGGALQVEAKEKTGQVK. The active-site Acyl-ester intermediate is the serine 89. The active-site Proton acceptor is the glutamate 185. A substrate-binding site is contributed by 251-253; it reads KSG.

This sequence belongs to the class-A beta-lactamase family.

It is found in the secreted. The catalysed reaction is a beta-lactam + H2O = a substituted beta-amino acid. Functionally, acts preferentially on penicillins. In Bacillus cereus, this protein is Beta-lactamase 1 (penPC).